The sequence spans 272 residues: Insulin-like growth factor-binding protein 1 (272 aa).

A signal peptide spans 1–25 (MPEFLTVVSWPFLILLSFQIGVAAG). An IGFBP N-terminal domain is found at 28-109 (QPWHCAPCTA…TRGQGACVPE (82 aa)). Intrachain disulfides connect C32/C59, C35/C61, C43/C62, C50/C65, C73/C86, and C80/C106. 3 positions are modified to phosphoserine: S139, S157, and S169. A Phosphothreonine modification is found at T170. Y171 is subject to Phosphotyrosine. Residues 186–264 (KEPCQRELYK…SLETRGDPNC (79 aa)) form the Thyroglobulin type-1 domain. Intrachain disulfides connect C189–C219, C230–C241, and C243–C264. S255 is subject to Phosphoserine. Positions 259–261 (RGD) match the Cell attachment site motif.

As to quaternary structure, binds equally well IGF1 and IGF2. Interacts with integrin ITGA5:ITGB1. Interacts with VHL; this interaction inhibits HIF1A degradation.

Its subcellular location is the secreted. In terms of biological role, multifunctional protein that plays a critical role in regulating the availability of IGFs such as IGF1 and IGF2 to their receptors and thereby regulates IGF-mediated cellular processes including cell migration, proliferation, differentiation or apoptosis in a cell-type specific manner. Also plays a positive role in cell migration by interacting with integrin ITGA5:ITGB1 through its RGD motif. Mechanistically, binding to integrins leads to activation of focal adhesion kinase/PTK2 and stimulation of the mitogen-activated protein kinase (MAPK) pathway. Regulates cardiomyocyte apoptosis by suppressing HIF-1alpha/HIF1A ubiquitination and subsequent degradation. This Mus musculus (Mouse) protein is Insulin-like growth factor-binding protein 1 (Igfbp1).